We begin with the raw amino-acid sequence, 948 residues long: UvrABC system protein A (948 aa).

Position 42–49 (42–49 (GLSGSGKS)) interacts with ATP. The segment at 262–289 (CPVCSYSLPELEPRLFSFNNPMGSCPTC) adopts a C4-type zinc-finger fold. 2 consecutive ABC transporter domains span residues 319–596 (WDKR…ENSV) and 616–945 (VNPG…KYLK). Residue 649–656 (GVSGSGKS) coordinates ATP. A C4-type zinc finger spans residues 748-774 (CEACQGDGVIKVEMHFLPDVYVPCEVC).

It belongs to the ABC transporter superfamily. UvrA family. As to quaternary structure, forms a heterotetramer with UvrB during the search for lesions.

It localises to the cytoplasm. The UvrABC repair system catalyzes the recognition and processing of DNA lesions. UvrA is an ATPase and a DNA-binding protein. A damage recognition complex composed of 2 UvrA and 2 UvrB subunits scans DNA for abnormalities. When the presence of a lesion has been verified by UvrB, the UvrA molecules dissociate. The chain is UvrABC system protein A from Neisseria meningitidis serogroup A / serotype 4A (strain DSM 15465 / Z2491).